The sequence spans 517 residues: MFSLQDLCRKHLFILPDVFGEHVLQRLGLYWRCHGSLQRVGDDHILIRRDLILSTNEALRMAGEEGNNEVVKLLLLWKGNLHYAIIGALQGDQYDLIHKYENQIGDFHLILPLIQDAKTFEKCHALERFCGVSCLLEHATKYNMLPILQTYQEELSMRAYLRETLFELACLWQRYDVLKWIEQTMHVYDLKIMFNIAISKRDLTMYSLGYILLFDRENTEATLLTQHLEKTAAKGLLYFVLETLKYGGNIDIVLTQAVKYNHRKLLDYFLRQLPRKHIEKLLLLAVQEKASKKTLNLLLSHLNYSVKRIKKLLRYVIEYESTLVIKILLKKRVNLIDAMLEKMVRYFSATKVRTIMDELLISPERVIKMAIQKMRTDIVIHTSYVWEDDLERLTRLKNMVYTIKYEHGKKMLIKVMHGIYKNLLYDEREKVMFHLAKLYVAQNAATQFRDICKDCYKLDVARFKPRFKQLMLDCLEIVTKKSCYSILEILEKHIISLFTMKVMTEEEKNLCLEILYK.

The protein belongs to the asfivirus MGF 505 family.

Functionally, plays a role in virus cell tropism, and may be required for efficient virus replication in macrophages. The polypeptide is Protein MGF 505-2R (Ornithodoros (relapsing fever ticks)).